We begin with the raw amino-acid sequence, 775 residues long: Melanoma-associated antigen D1 (775 aa).

The disordered stretch occupies residues 37–330 (SEAPPTSQAT…PARQTPSAWQ (294 aa)). Residues 39–50 (APPTSQATAAAS) are compositionally biased toward low complexity. Polar residues-rich tracts occupy residues 52-63 (PNASPQSSQPPT), 84-100 (KAQN…SQAR), 107-120 (KNQS…QNGT), 149-178 (GQNS…NQPK), 221-235 (AQTS…NVES), 247-258 (VNNLNVEENNSG), and 296-308 (LAWQ…QNQT). A run of 19 repeats spans residues 292–297 (WQTPLA), 298–303 (WQNPSG), 304–309 (WQNQTA), 329–334 (WQNPVA), 335–340 (WQNPVI), 341–346 (WPNPVI), 347–352 (WQNPVI), 353–358 (WPNPIV), 359–364 (WPGPIV), 365–370 (WPNPMA), 371–376 (WQSTPG), 377–382 (WQSPPS), 383–388 (WQAPPS), 389–394 (WQSPQD), 395–400 (WQGPPD), 401–406 (WQVPPD), 407–412 (WSMPPD), 413–418 (WSFPSD), and 419–424 (WPFPPD). A 22 X 6 AA tandem repeats of W-[PQ]-X-P-X-X region spans residues 292–441 (WQTPLAWQNP…IPPDWQNLRP (150 aa)). The span at 309-326 (ARQTPPAARQSPPARQTP) shows a compositional bias: low complexity. The disordered stretch occupies residues 374–409 (TPGWQSPPSWQAPPSWQSPQDWQGPPDWQVPPDWSM). Residues 375-406 (PGWQSPPSWQAPPSWQSPQDWQGPPDWQVPPD) show a composition bias toward low complexity. The stretch at 425 to 429 (WIPAD) is one 20; approximate repeat. A run of 2 repeats spans residues 430–435 (WPIPPD) and 436–441 (WQNLRP). Residues 437–452 (QNLRPSPNLRSSSNSR) show a composition bias toward low complexity. Residues 437–463 (QNLRPSPNLRSSSNSRASQNQGPPQPR) form a disordered region. Residues 468 to 666 (LQERANKLVK…RDWTAQFMEA (199 aa)) enclose the MAGE domain.

In terms of assembly, interacts with DLX5, DLX7 and MSX2 and forms homomultimers. Interacts with UNC5A. Interacts with TRIM28 and PJA1. Interacts with NGFR/p75NTR and RORA. As to expression, ubiquitously expressed in many adult tissues, except for the spleen. Expressed in osteoblastic and chondrogenic cell lines and also during embryonic development.

It is found in the nucleus. The protein resides in the cytoplasm. It localises to the cell membrane. Involved in the apoptotic response after nerve growth factor (NGF) binding in neuronal cells. Inhibits cell cycle progression, and facilitates NGFR-mediated apoptosis. May act as a regulator of the function of DLX family members. May enhance ubiquitin ligase activity of RING-type zinc finger-containing E3 ubiquitin-protein ligases. Proposed to act through recruitment and/or stabilization of the Ubl-conjugating enzyme (E2) at the E3:substrate complex. Plays a role in the circadian rhythm regulation. May act as RORA coregulator, modulating the expression of core clock genes such as BMAL1 and NFIL3, induced, or NR1D1, repressed. This Mus musculus (Mouse) protein is Melanoma-associated antigen D1 (Maged1).